We begin with the raw amino-acid sequence, 487 residues long: Bifunctional protein GlmU (487 aa).

Residues 1–232 are pyrophosphorylase; it reads MAVIVLAAGA…AAELAGVNDR (232 aa). UDP-N-acetyl-alpha-D-glucosamine contacts are provided by residues 6-9, Lys-20, Gln-77, and 82-83; these read LAAG and GT. Mg(2+) is bound at residue Asp-107. The UDP-N-acetyl-alpha-D-glucosamine site is built by Gly-142, Glu-157, Asn-172, and Asn-230. Position 230 (Asn-230) interacts with Mg(2+). A linker region spans residues 233–253; sequence VQLAAAGAELNRRTVTAAMRG. The N-acetyltransferase stretch occupies residues 254–487; that stretch reads GATIVDPATT…PTSTPQADQE (234 aa). Positions 335 and 353 each coordinate UDP-N-acetyl-alpha-D-glucosamine. The active-site Proton acceptor is the His-365. 2 residues coordinate UDP-N-acetyl-alpha-D-glucosamine: Tyr-368 and Asn-379. Acetyl-CoA is bound by residues Ala-382, 388–389, Ser-407, and Ala-425; that span reads NY. The tract at residues 453-487 is disordered; that stretch reads AKKRPGTPAAEAGEAAAKRVAEGGSPTSTPQADQE. Positions 477 to 487 are enriched in polar residues; the sequence is SPTSTPQADQE.

In the N-terminal section; belongs to the N-acetylglucosamine-1-phosphate uridyltransferase family. It in the C-terminal section; belongs to the transferase hexapeptide repeat family. Homotrimer. It depends on Mg(2+) as a cofactor.

It localises to the cytoplasm. It carries out the reaction alpha-D-glucosamine 1-phosphate + acetyl-CoA = N-acetyl-alpha-D-glucosamine 1-phosphate + CoA + H(+). The catalysed reaction is N-acetyl-alpha-D-glucosamine 1-phosphate + UTP + H(+) = UDP-N-acetyl-alpha-D-glucosamine + diphosphate. Its pathway is nucleotide-sugar biosynthesis; UDP-N-acetyl-alpha-D-glucosamine biosynthesis; N-acetyl-alpha-D-glucosamine 1-phosphate from alpha-D-glucosamine 6-phosphate (route II): step 2/2. It participates in nucleotide-sugar biosynthesis; UDP-N-acetyl-alpha-D-glucosamine biosynthesis; UDP-N-acetyl-alpha-D-glucosamine from N-acetyl-alpha-D-glucosamine 1-phosphate: step 1/1. It functions in the pathway bacterial outer membrane biogenesis; LPS lipid A biosynthesis. Catalyzes the last two sequential reactions in the de novo biosynthetic pathway for UDP-N-acetylglucosamine (UDP-GlcNAc). The C-terminal domain catalyzes the transfer of acetyl group from acetyl coenzyme A to glucosamine-1-phosphate (GlcN-1-P) to produce N-acetylglucosamine-1-phosphate (GlcNAc-1-P), which is converted into UDP-GlcNAc by the transfer of uridine 5-monophosphate (from uridine 5-triphosphate), a reaction catalyzed by the N-terminal domain. This Corynebacterium jeikeium (strain K411) protein is Bifunctional protein GlmU.